The primary structure comprises 569 residues: Glutamate--tRNA ligase (569 aa).

A 'HIGH' region motif is present at residues 110–120 (PNPNGPPTLGS).

This sequence belongs to the class-I aminoacyl-tRNA synthetase family. Glutamate--tRNA ligase type 2 subfamily.

The protein localises to the cytoplasm. It carries out the reaction tRNA(Glu) + L-glutamate + ATP = L-glutamyl-tRNA(Glu) + AMP + diphosphate. In terms of biological role, catalyzes the attachment of glutamate to tRNA(Glu) in a two-step reaction: glutamate is first activated by ATP to form Glu-AMP and then transferred to the acceptor end of tRNA(Glu). This Methanococcoides burtonii (strain DSM 6242 / NBRC 107633 / OCM 468 / ACE-M) protein is Glutamate--tRNA ligase.